Consider the following 180-residue polypeptide: Large ribosomal subunit protein uL5 (180 aa).

Belongs to the universal ribosomal protein uL5 family. As to quaternary structure, part of the 50S ribosomal subunit; part of the 5S rRNA/L5/L18/L25 subcomplex. Contacts the 5S rRNA and the P site tRNA. Forms a bridge to the 30S subunit in the 70S ribosome.

Its function is as follows. This is one of the proteins that bind and probably mediate the attachment of the 5S RNA into the large ribosomal subunit, where it forms part of the central protuberance. In the 70S ribosome it contacts protein S13 of the 30S subunit (bridge B1b), connecting the 2 subunits; this bridge is implicated in subunit movement. Contacts the P site tRNA; the 5S rRNA and some of its associated proteins might help stabilize positioning of ribosome-bound tRNAs. This is Large ribosomal subunit protein uL5 from Chlamydia trachomatis serovar A (strain ATCC VR-571B / DSM 19440 / HAR-13).